Consider the following 336-residue polypeptide: Protein REVEILLE 7-like (336 aa).

The region spanning 60–114 is the HTH myb-type domain; sequence TVTKQREKWSEEEHDRFLEAIKLYGRGWRQIQEHIGTKTAVQIRSHAQKFFSKMA. A DNA-binding region (H-T-H motif) is located at residues 87–110; that stretch reads WRQIQEHIGTKTAVQIRSHAQKFF. Residues 114–197 are disordered; sequence AQEADSRSEG…KQPFKDDSDI (84 aa). Positions 134-144 are enriched in basic residues; that stretch reads RPKRKPAHPYP. A compositionally biased stretch (pro residues) spans 145 to 158; it reads RKSPVPYTQSPPPN. The span at 167–189 shows a compositional bias: polar residues; sequence KSPTSVLSSFGSEDQNNYTTSKQ.

Its subcellular location is the nucleus. Probable transcription factor. The sequence is that of Protein REVEILLE 7-like (RVE7L) from Arabidopsis thaliana (Mouse-ear cress).